Reading from the N-terminus, the 157-residue chain is MVSKELSKEQRQKRIQDIIARESISTQGELVQRLRADNIQVTQATISRDINELRLVRLPIGKGRHRYALAQMTGHTDVEEELGRLFQNFVHDVDRGENMLVIRTADGHATGVALLLDRLRRDDIVGTLAGEDTIFVVARTTLEAESLMEEFHALMLG.

This sequence belongs to the ArgR family.

It localises to the cytoplasm. It participates in amino-acid biosynthesis; L-arginine biosynthesis [regulation]. In terms of biological role, regulates arginine biosynthesis genes. The chain is Arginine repressor from Deinococcus deserti (strain DSM 17065 / CIP 109153 / LMG 22923 / VCD115).